Reading from the N-terminus, the 1032-residue chain is Leucine-rich repeat and coiled-coil domain-containing protein 1 (1032 aa).

LRR repeat units follow at residues 44–65 (TLHA…DHIW), 66–87 (NLQH…NTLT), 88–109 (KLCT…EELI), 110–131 (NLTR…IPLH), and 136–157 (KLRY…LQCM). Residues 175-218 (NPVCRLPGYRAVILQTLPQLRILDCKNIFGEPVNLTEINSSQLQ) enclose the LRRCT domain. The disordered stretch occupies residues 316–345 (DNVLEKDPRPKRDTDITSESDYGNRKECNR). Positions 318–330 (VLEKDPRPKRDTD) are enriched in basic and acidic residues. The stretch at 421-647 (NTYQSLVEQL…DLENEFRIAL (227 aa)) forms a coiled coil.

This sequence belongs to the LRRCC1 family.

It localises to the cytoplasm. The protein localises to the cytoskeleton. It is found in the microtubule organizing center. Its subcellular location is the centrosome. The protein resides in the centriole. Required for the organization of the mitotic spindle. Maintains the structural integrity of centrosomes during mitosis. This chain is Leucine-rich repeat and coiled-coil domain-containing protein 1 (LRRCC1), found in Homo sapiens (Human).